The following is a 355-amino-acid chain: 3-dehydroquinate synthase (355 aa).

NAD(+) is bound by residues 98–102 (GVIGD), 122–123 (TT), lysine 135, lysine 144, and 162–165 (TLNT). 3 residues coordinate Zn(2+): glutamate 177, histidine 240, and histidine 257.

The protein belongs to the sugar phosphate cyclases superfamily. Dehydroquinate synthase family. It depends on Co(2+) as a cofactor. Zn(2+) is required as a cofactor. The cofactor is NAD(+).

The protein localises to the cytoplasm. The enzyme catalyses 7-phospho-2-dehydro-3-deoxy-D-arabino-heptonate = 3-dehydroquinate + phosphate. The protein operates within metabolic intermediate biosynthesis; chorismate biosynthesis; chorismate from D-erythrose 4-phosphate and phosphoenolpyruvate: step 2/7. Catalyzes the conversion of 3-deoxy-D-arabino-heptulosonate 7-phosphate (DAHP) to dehydroquinate (DHQ). The chain is 3-dehydroquinate synthase from Dictyoglomus thermophilum (strain ATCC 35947 / DSM 3960 / H-6-12).